The sequence spans 557 residues: Dihydroxy-acid dehydratase (557 aa).

Residue C49 participates in [2Fe-2S] cluster binding. Position 81 (D81) interacts with Mg(2+). C122 contacts [2Fe-2S] cluster. Mg(2+) is bound by residues D123 and K124. K124 is subject to N6-carboxylysine. Residue C194 participates in [2Fe-2S] cluster binding. Residue E446 coordinates Mg(2+). S472 serves as the catalytic Proton acceptor.

It belongs to the IlvD/Edd family. Homodimer. It depends on [2Fe-2S] cluster as a cofactor. Mg(2+) is required as a cofactor.

The catalysed reaction is (2R)-2,3-dihydroxy-3-methylbutanoate = 3-methyl-2-oxobutanoate + H2O. The enzyme catalyses (2R,3R)-2,3-dihydroxy-3-methylpentanoate = (S)-3-methyl-2-oxopentanoate + H2O. It participates in amino-acid biosynthesis; L-isoleucine biosynthesis; L-isoleucine from 2-oxobutanoate: step 3/4. The protein operates within amino-acid biosynthesis; L-valine biosynthesis; L-valine from pyruvate: step 3/4. Functionally, functions in the biosynthesis of branched-chain amino acids. Catalyzes the dehydration of (2R,3R)-2,3-dihydroxy-3-methylpentanoate (2,3-dihydroxy-3-methylvalerate) into 2-oxo-3-methylpentanoate (2-oxo-3-methylvalerate) and of (2R)-2,3-dihydroxy-3-methylbutanoate (2,3-dihydroxyisovalerate) into 2-oxo-3-methylbutanoate (2-oxoisovalerate), the penultimate precursor to L-isoleucine and L-valine, respectively. The chain is Dihydroxy-acid dehydratase from Prochlorococcus marinus (strain MIT 9312).